We begin with the raw amino-acid sequence, 123 residues long: Small ribosomal subunit protein uS11 (123 aa).

It belongs to the universal ribosomal protein uS11 family. As to quaternary structure, part of the 30S ribosomal subunit. Interacts with proteins S7 and S18. Binds to IF-3.

In terms of biological role, located on the platform of the 30S subunit, it bridges several disparate RNA helices of the 16S rRNA. Forms part of the Shine-Dalgarno cleft in the 70S ribosome. This Coxiella burnetii (strain RSA 331 / Henzerling II) protein is Small ribosomal subunit protein uS11.